The chain runs to 330 residues: Ketol-acid reductoisomerase (NADP(+)) (330 aa).

One can recognise a KARI N-terminal Rossmann domain in the interval 1-181 (MKVLYDDDVN…GLTRAGVIET (181 aa)). Residues 24 to 27 (YGSQ), arginine 47, serine 52, and 82 to 85 (DEIQ) each bind NADP(+). Residue histidine 107 is part of the active site. Position 133 (glycine 133) interacts with NADP(+). One can recognise a KARI C-terminal knotted domain in the interval 182–327 (TYREETETDL…KNLRIACGLQ (146 aa)). 4 residues coordinate Mg(2+): aspartate 190, glutamate 194, glutamate 226, and glutamate 230. Substrate is bound at residue serine 251.

Belongs to the ketol-acid reductoisomerase family. Mg(2+) serves as cofactor.

It catalyses the reaction (2R)-2,3-dihydroxy-3-methylbutanoate + NADP(+) = (2S)-2-acetolactate + NADPH + H(+). It carries out the reaction (2R,3R)-2,3-dihydroxy-3-methylpentanoate + NADP(+) = (S)-2-ethyl-2-hydroxy-3-oxobutanoate + NADPH + H(+). The protein operates within amino-acid biosynthesis; L-isoleucine biosynthesis; L-isoleucine from 2-oxobutanoate: step 2/4. It functions in the pathway amino-acid biosynthesis; L-valine biosynthesis; L-valine from pyruvate: step 2/4. Its function is as follows. Involved in the biosynthesis of branched-chain amino acids (BCAA). Catalyzes an alkyl-migration followed by a ketol-acid reduction of (S)-2-acetolactate (S2AL) to yield (R)-2,3-dihydroxy-isovalerate. In the isomerase reaction, S2AL is rearranged via a Mg-dependent methyl migration to produce 3-hydroxy-3-methyl-2-ketobutyrate (HMKB). In the reductase reaction, this 2-ketoacid undergoes a metal-dependent reduction by NADPH to yield (R)-2,3-dihydroxy-isovalerate. The chain is Ketol-acid reductoisomerase (NADP(+)) from Methanosphaera stadtmanae (strain ATCC 43021 / DSM 3091 / JCM 11832 / MCB-3).